Reading from the N-terminus, the 150-residue chain is Ribonuclease K6 (150 aa).

Positions 1–23 (MVLCFPLLLLLLVLWGPVCPLHA) are cleaved as a signal peptide. His-38 serves as the catalytic Proton acceptor. Intrachain disulfides connect Cys-46–Cys-104, Cys-60–Cys-114, Cys-78–Cys-129, and Cys-85–Cys-92. Substrate contacts are provided by residues 61-65 (KHQNT) and Lys-86. Asn-100 is a glycosylation site (N-linked (GlcNAc...) asparagine). Arg-105 serves as a coordination point for substrate. Residue His-145 is the Proton donor of the active site.

This sequence belongs to the pancreatic ribonuclease family. As to quaternary structure, interacts (via N-terminus) with bacterial lipopolysaccharide (LPS).

The protein resides in the secreted. It is found in the lysosome. Its subcellular location is the cytoplasmic granule. In terms of biological role, ribonuclease which shows a preference for the pyrimidines uridine and cytosine. Has potent antibacterial activity against a range of Gram-positive and Gram-negative bacteria, including P.aeruginosa, A.baumanii, M.luteus, S.aureus, E.faecalis, E.faecium, S.saprophyticus and E.coli. Causes loss of bacterial membrane integrity, and also promotes agglutination of Gram-negative bacteria. Probably contributes to urinary tract sterility. Bactericidal activity is independent of RNase activity. This is Ribonuclease K6 (RNASE6) from Pan troglodytes (Chimpanzee).